The following is a 105-amino-acid chain: Antitoxin YfjZ (105 aa).

It belongs to the CbeA/YafW/YfjZ antitoxin family.

Antitoxin component of a type IV toxin-antitoxin (TA) system. Antitoxin that counteracts the effect of cognate toxin YpjF. Also counteracts the effect of non-cognate toxins CbtA and YfkI. The chain is Antitoxin YfjZ (yfjZ) from Escherichia coli (strain K12).